Reading from the N-terminus, the 101-residue chain is Urease subunit beta (101 aa).

Belongs to the urease beta subunit family. Heterotrimer of UreA (gamma), UreB (beta) and UreC (alpha) subunits. Three heterotrimers associate to form the active enzyme.

The protein resides in the cytoplasm. The enzyme catalyses urea + 2 H2O + H(+) = hydrogencarbonate + 2 NH4(+). The protein operates within nitrogen metabolism; urea degradation; CO(2) and NH(3) from urea (urease route): step 1/1. This chain is Urease subunit beta, found in Rhodopseudomonas palustris (strain HaA2).